The sequence spans 347 residues: Dihydroorotase (347 aa).

His-13 and His-15 together coordinate Zn(2+). Residues 15-17 (HLR) and Asn-41 contribute to the substrate site. Lys-99, His-136, and His-174 together coordinate Zn(2+). Lys-99 bears the N6-carboxylysine mark. His-136 lines the substrate pocket. Leu-219 lines the substrate pocket. Residue Asp-247 participates in Zn(2+) binding. Residue Asp-247 is part of the active site. 2 residues coordinate substrate: His-251 and Ala-263.

It belongs to the metallo-dependent hydrolases superfamily. DHOase family. Class II DHOase subfamily. Homodimer. Requires Zn(2+) as cofactor.

The enzyme catalyses (S)-dihydroorotate + H2O = N-carbamoyl-L-aspartate + H(+). It participates in pyrimidine metabolism; UMP biosynthesis via de novo pathway; (S)-dihydroorotate from bicarbonate: step 3/3. In terms of biological role, catalyzes the reversible cyclization of carbamoyl aspartate to dihydroorotate. This chain is Dihydroorotase, found in Rhizobium meliloti (strain 1021) (Ensifer meliloti).